Reading from the N-terminus, the 142-residue chain is Large ribosomal subunit protein uL11 (142 aa).

Belongs to the universal ribosomal protein uL11 family. In terms of assembly, part of the ribosomal stalk of the 50S ribosomal subunit. Interacts with L10 and the large rRNA to form the base of the stalk. L10 forms an elongated spine to which L12 dimers bind in a sequential fashion forming a multimeric L10(L12)X complex. In terms of processing, one or more lysine residues are methylated.

Its function is as follows. Forms part of the ribosomal stalk which helps the ribosome interact with GTP-bound translation factors. The polypeptide is Large ribosomal subunit protein uL11 (Brucella anthropi (strain ATCC 49188 / DSM 6882 / CCUG 24695 / JCM 21032 / LMG 3331 / NBRC 15819 / NCTC 12168 / Alc 37) (Ochrobactrum anthropi)).